A 147-amino-acid polypeptide reads, in one-letter code: UPF0260 protein PMI1174 (147 aa).

It belongs to the UPF0260 family.

This is UPF0260 protein PMI1174 from Proteus mirabilis (strain HI4320).